Consider the following 868-residue polypeptide: Receptor-like protein kinase At5g59670 (868 aa).

The N-terminal stretch at 1 to 22 (MESSFGLLLALLTLTIIHIVQA) is a signal peptide. Over 23–500 (QDPQGFISLD…PRLIKPPKKE (478 aa)) the chain is Extracellular. Residues Asn38, Asn94, Asn141, Asn287, Asn300, Asn372, Asn405, Asn416, Asn423, Asn445, Asn464, and Asn471 are each glycosylated (N-linked (GlcNAc...) asparagine). LRR repeat units lie at residues 409–432 (PPRITSLNLSSSRLNGTIAAAIQS), 433–459 (ITQLETLDLSYNNLTGEVPEFLGKMKS), and 461–481 (SVINLSGNNLNGSIPQALRKK). The chain crosses the membrane as a helical span at residues 501–521 (FPVAIVTLVVFVTVIVVLFLV). Residues 522-868 (FRKKMSTIVK…LDTTAVPMAR (347 aa)) are Cytoplasmic-facing. Phosphothreonine is present on Thr555. One can recognise a Protein kinase domain in the interval 564-834 (KNFQRVLGKG…SMSQVIHELK (271 aa)). Residues 570–578 (LGKGGFGMV) and Lys592 contribute to the ATP site. A Phosphotyrosine modification is found at Tyr637. The Proton acceptor role is filled by Asp689. Ser723 bears the Phosphoserine mark. 2 positions are modified to phosphothreonine: Thr724 and Thr729.

This sequence belongs to the protein kinase superfamily. Ser/Thr protein kinase family. In terms of processing, autophosphorylated on Tyr and Thr residues.

The protein resides in the cell membrane. It catalyses the reaction L-seryl-[protein] + ATP = O-phospho-L-seryl-[protein] + ADP + H(+). The enzyme catalyses L-threonyl-[protein] + ATP = O-phospho-L-threonyl-[protein] + ADP + H(+). The catalysed reaction is L-tyrosyl-[protein] + ATP = O-phospho-L-tyrosyl-[protein] + ADP + H(+). Probable receptor with a dual specificity kinase activity acting on both serine/threonine- and tyrosine-containing substrates. This Arabidopsis thaliana (Mouse-ear cress) protein is Receptor-like protein kinase At5g59670.